Consider the following 376-residue polypeptide: Palmitoyl-[acyl-carrier-protein] 4-desaturase 2, chloroplastic (376 aa).

Residues 1–33 (MELHLALRASPLPAADPGRRPPPPRGNFATNCT) constitute a chloroplast transit peptide. Fe cation is bound by residues Glu114, Glu149, His152, Glu202, Glu235, and His238.

It belongs to the fatty acid desaturase type 2 family. Homodimer. It depends on Fe(2+) as a cofactor. As to expression, preferentially expressed in the flower labellum.

It localises to the plastid. It is found in the chloroplast stroma. The catalysed reaction is hexadecanoyl-[ACP] + 2 reduced [2Fe-2S]-[ferredoxin] + O2 + 2 H(+) = (4Z)-hexadecenoyl-[ACP] + 2 oxidized [2Fe-2S]-[ferredoxin] + 2 H2O. The enzyme catalyses octadecanoyl-[ACP] + 2 reduced [2Fe-2S]-[ferredoxin] + O2 + 2 H(+) = (9Z)-octadecenoyl-[ACP] + 2 oxidized [2Fe-2S]-[ferredoxin] + 2 H2O. Its pathway is lipid metabolism; fatty acid metabolism. In terms of biological role, converts stearoyl-ACP to oleoyl-ACP by introduction of a cis double bond between carbons 9 and 10 of the acyl chain. Converts palmitoyl-ACP to (4Z)-hexadec-4-enoyl-ACP by introduction of a cis double bond between carbons 4 and 5 of the acyl chain. Catalyzes the desaturation of saturated fatty acid 18:0 and 16:0 to generate 18:1 (delta-9) and 16:1 (delta-4) intermediates, expected to give rise to 9-alkenes and 12-alkenes, respectively. This is Palmitoyl-[acyl-carrier-protein] 4-desaturase 2, chloroplastic (SAD2) from Ophrys arachnitiformis subsp. archipelagi (Orchid).